The primary structure comprises 676 residues: Envelope fusion protein (676 aa).

A signal peptide spans 1 to 16 (MSPLALIVLLAWHATA). Asparagine 76 and asparagine 87 each carry an N-linked (GlcNAc...) asparagine; by host glycan. Residues 169–215 (ARELHDLAKTSNALNEQIKEVTDELVNIAKFEEHKQCLERQRDDLCG) are a coiled coil. N-linked (GlcNAc...) asparagine; by host glycans are attached at residues asparagine 266, asparagine 469, asparagine 505, and asparagine 548. The helical transmembrane segment at 577-597 (CATAEAVVACVVLFLVALLLF) threads the bilayer. The N-linked (GlcNAc...) asparagine; by host glycan is linked to asparagine 628.

N-glycosylated.

Its subcellular location is the virion membrane. The protein resides in the host cell membrane. In terms of biological role, envelope glycoprotein which mediates the fusion of viral and host endosomal membranes leading to virus entry into the host cell. This is Envelope fusion protein from Lepidoptera (butterflies and moths).